Here is a 223-residue protein sequence, read N- to C-terminus: Noggin-3 (223 aa).

The first 23 residues, 1–23 (MDNIPYFLATVLIFSLGFRIEEG), serve as a signal peptide directing secretion. N-linked (GlcNAc...) asparagine glycosylation is found at Asn-60 and Asn-93.

Belongs to the noggin family. Homodimer; disulfide-linked.

It is found in the secreted. May function as an inhibitor of bone morphogenetic proteins (BMP) signaling during later stages of development including late phases of dorsoventral patterning, to refine the early pattern set up by the interaction of chordino and BMP2/4. Not involved in organizer function or early phases of dorsoventral pattern formation. In Danio rerio (Zebrafish), this protein is Noggin-3 (nog3).